Reading from the N-terminus, the 199-residue chain is Molybdenum cofactor guanylyltransferase (199 aa).

Residues L12 to G14, K25, N53, D71, and D101 each bind GTP. Mg(2+) is bound at residue D101.

Belongs to the MobA family. Monomer. Mg(2+) is required as a cofactor.

Its subcellular location is the cytoplasm. It carries out the reaction Mo-molybdopterin + GTP + H(+) = Mo-molybdopterin guanine dinucleotide + diphosphate. Transfers a GMP moiety from GTP to Mo-molybdopterin (Mo-MPT) cofactor (Moco or molybdenum cofactor) to form Mo-molybdopterin guanine dinucleotide (Mo-MGD) cofactor. The protein is Molybdenum cofactor guanylyltransferase of Cupriavidus taiwanensis (strain DSM 17343 / BCRC 17206 / CCUG 44338 / CIP 107171 / LMG 19424 / R1) (Ralstonia taiwanensis (strain LMG 19424)).